The sequence spans 119 residues: Large ribosomal subunit protein bL20c (119 aa).

It belongs to the bacterial ribosomal protein bL20 family.

Its subcellular location is the plastid. It is found in the chloroplast. Binds directly to 23S ribosomal RNA and is necessary for the in vitro assembly process of the 50S ribosomal subunit. It is not involved in the protein synthesizing functions of that subunit. The protein is Large ribosomal subunit protein bL20c of Saccharum hybrid (Sugarcane).